A 209-amino-acid chain; its full sequence is Thymidylate kinase (209 aa).

13–20 lines the ATP pocket; it reads GLEGAGKS.

Belongs to the thymidylate kinase family.

It catalyses the reaction dTMP + ATP = dTDP + ADP. In terms of biological role, phosphorylation of dTMP to form dTDP in both de novo and salvage pathways of dTTP synthesis. In Shewanella sp. (strain MR-4), this protein is Thymidylate kinase.